The chain runs to 132 residues: MWNEFKKFAFKGNVVDLAVGVVIGAAFGKIVSSLVKDIITPLLGMVLGGVDFTSLHFGYGKSAVMYGNFIQTIFDFLIIAASIFMFVKVFNKLTSKKEEEKEEEIPEPTKEEELLGEIRDLLKQQNSSKDRA.

3 helical membrane passes run 14–34 (VVDL…VSSL), 38–58 (IITP…LHFG), and 67–87 (GNFI…FMFV).

The protein belongs to the MscL family. Homopentamer.

It localises to the cell membrane. Its function is as follows. Channel that opens in response to stretch forces in the membrane lipid bilayer. May participate in the regulation of osmotic pressure changes within the cell. The protein is Large-conductance mechanosensitive channel of Bacillus cereus (strain B4264).